Reading from the N-terminus, the 1741-residue chain is Meiosis regulator and mRNA stability factor 1 (1741 aa).

Residues 345 to 482 form the NYN domain; it reads IGVFWDIENC…ALLHHAHELV (138 aa). 3 disordered regions span residues 594–636, 659–678, and 683–716; these read KVKS…GSVI, TENHQEHLREIPSQNNSHAA, and LTTKKSGVGESSCKSSYKKETSVSRSMTNSPVDK. A compositionally biased stretch (basic and acidic residues) spans 659–668; sequence TENHQEHLRE. One can recognise an RRM domain in the interval 788 to 867; the sequence is ADIQISNIDY…KRIQVSLATG (80 aa). HTH OST-type domains are found at residues 872 to 946, 1000 to 1076, 1097 to 1171, 1173 to 1248, 1257 to 1332, 1333 to 1408, 1409 to 1483, and 1484 to 1558; these read SLSL…SPLG, SLKT…HNKP, QLIQ…LTHR, QVKR…IPKR, RTKQ…TEVE, QVKA…INRK, SLRT…VRLT, and NLYM…LKND. Residues 1684–1700 show a composition bias toward polar residues; sequence KLTSGSVASSTAENTSV. A disordered region spans residues 1684-1727; sequence KLTSGSVASSTAENTSVPPRHSSETQLNKEAMDSPAKKQHKNKV.

It is found in the peroxisome. Its function is as follows. Essential regulator of oogenesis required for female meiotic progression to repress transposable elements and preventing their mobilization, which is essential for the germline integrity. The protein is Meiosis regulator and mRNA stability factor 1 of Gallus gallus (Chicken).